Here is a 108-residue protein sequence, read N- to C-terminus: Thiosulfate sulfurtransferase GlpE (108 aa).

Residues 17-105 form the Rhodanese domain; the sequence is QEKEAVLVDI…WQRQFPAEVA (89 aa). The active-site Cysteine persulfide intermediate is Cys-65.

It belongs to the GlpE family.

It localises to the cytoplasm. The enzyme catalyses thiosulfate + hydrogen cyanide = thiocyanate + sulfite + 2 H(+). It catalyses the reaction thiosulfate + [thioredoxin]-dithiol = [thioredoxin]-disulfide + hydrogen sulfide + sulfite + 2 H(+). Transferase that catalyzes the transfer of sulfur from thiosulfate to thiophilic acceptors such as cyanide or dithiols. May function in a CysM-independent thiosulfate assimilation pathway by catalyzing the conversion of thiosulfate to sulfite, which can then be used for L-cysteine biosynthesis. The polypeptide is Thiosulfate sulfurtransferase GlpE (Escherichia coli O127:H6 (strain E2348/69 / EPEC)).